The following is a 429-amino-acid chain: MAAIIVVGAQWGDEGKGKATDILGGQVDYVVKPNGGNNAGHTVVVGGEKYELKLLPAGILSDNATSIIGNGCVVNLEALFEEIDGLQARGADTSHLRVSANAQLVAPYHVAIDRVSERFLGKRAIGTTGRGIGPTYQDKVGRVGIRAQDLLDESILRQKIESALDKKNQMLVKMYNRRAIEPEEVVQYFLSYADRLAPMLIDSSKVLNEALDRGERVLMEGGQATMLDVDHGTYPFVTSSNPTTGGACVGSGVGPTRITSSLGIIKAYTTRVGAGPFPTELFDKWGEYLQTTGGEVGVNTGRPRRCGWYDSVIARYASRVNGFTDYFLTKLDVLTGIGEIPICVAYDVDGVRHDEMPMTQTEFHHATPIYETMPAWDEDITGCRTFEELPEKAQDYVKRLEELSGCRMSYIGVGPGRDQTIVINDILKD.

GTP is bound by residues 12-18 and 40-42; these read GDEGKGK and GHT. Catalysis depends on Asp13, which acts as the Proton acceptor. 2 residues coordinate Mg(2+): Asp13 and Gly40. IMP-binding positions include 13–16, 38–41, Thr128, Arg142, Gln223, Thr238, and Arg302; these read DEGK and NAGH. The active-site Proton donor is the His41. Residue 298 to 304 coordinates substrate; it reads VNTGRPR. GTP is bound by residues Arg304, 330–332, and 412–414; these read KLD and GVG.

It belongs to the adenylosuccinate synthetase family. As to quaternary structure, homodimer. The cofactor is Mg(2+).

The protein resides in the cytoplasm. It catalyses the reaction IMP + L-aspartate + GTP = N(6)-(1,2-dicarboxyethyl)-AMP + GDP + phosphate + 2 H(+). It participates in purine metabolism; AMP biosynthesis via de novo pathway; AMP from IMP: step 1/2. Its function is as follows. Plays an important role in the de novo pathway of purine nucleotide biosynthesis. Catalyzes the first committed step in the biosynthesis of AMP from IMP. In Corynebacterium urealyticum (strain ATCC 43042 / DSM 7109), this protein is Adenylosuccinate synthetase.